The following is a 131-amino-acid chain: D-ribose pyranase (131 aa).

The Proton donor role is filled by His20. Substrate is bound by residues Asp28, His98, and 120–122 (YSN).

It belongs to the RbsD / FucU family. RbsD subfamily. Homodecamer.

The protein localises to the cytoplasm. The catalysed reaction is beta-D-ribopyranose = beta-D-ribofuranose. Its pathway is carbohydrate metabolism; D-ribose degradation; D-ribose 5-phosphate from beta-D-ribopyranose: step 1/2. In terms of biological role, catalyzes the interconversion of beta-pyran and beta-furan forms of D-ribose. This Lactiplantibacillus plantarum (strain ATCC BAA-793 / NCIMB 8826 / WCFS1) (Lactobacillus plantarum) protein is D-ribose pyranase.